The chain runs to 260 residues: Cobalt transport protein CbiM (260 aa).

The first 34 residues, 1–34 (MKLGESMKKNATLSVKIIAFLGVLIFTVMPVANA), serve as a signal peptide directing secretion. The next 6 membrane-spanning stretches (helical) occupy residues 39–59 (EGYL…PFLI), 77–97 (LLFA…LPSF), 109–129 (LSTI…VLLF), 132–152 (LLLA…MAVM), 175–195 (IFFS…IQLG), and 215–235 (VFAI…VLIF).

Belongs to the CbiM family. In terms of assembly, forms an energy-coupling factor (ECF) transporter complex composed of an ATP-binding protein (A component, CbiO), a transmembrane protein (T component, CbiQ) and 2 possible substrate-capture proteins (S components, CbiM and CbiN) of unknown stoichimetry.

Its subcellular location is the cell membrane. It functions in the pathway cofactor biosynthesis; adenosylcobalamin biosynthesis. Part of the energy-coupling factor (ECF) transporter complex CbiMNOQ involved in cobalt import. The chain is Cobalt transport protein CbiM from Clostridium cellulovorans (strain ATCC 35296 / DSM 3052 / OCM 3 / 743B).